Here is a 103-residue protein sequence, read N- to C-terminus: Large ribosomal subunit protein uL24 (103 aa).

The protein belongs to the universal ribosomal protein uL24 family. As to quaternary structure, part of the 50S ribosomal subunit.

One of two assembly initiator proteins, it binds directly to the 5'-end of the 23S rRNA, where it nucleates assembly of the 50S subunit. Functionally, one of the proteins that surrounds the polypeptide exit tunnel on the outside of the subunit. This chain is Large ribosomal subunit protein uL24 (rplX), found in Bacillus spizizenii (strain ATCC 23059 / NRRL B-14472 / W23) (Bacillus subtilis subsp. spizizenii).